We begin with the raw amino-acid sequence, 274 residues long: Dermonecrotic toxin SdSicTox-betaIIB2ii (274 aa).

H5 is a catalytic residue. Residues E25 and D27 each contribute to the Mg(2+) site. The active-site Nucleophile is the H41. 2 disulfide bridges follow: C45/C51 and C47/C190. D85 contacts Mg(2+).

Belongs to the arthropod phospholipase D family. Class II subfamily. The cofactor is Mg(2+). As to expression, expressed by the venom gland.

Its subcellular location is the secreted. The catalysed reaction is an N-(acyl)-sphingosylphosphocholine = an N-(acyl)-sphingosyl-1,3-cyclic phosphate + choline. It carries out the reaction an N-(acyl)-sphingosylphosphoethanolamine = an N-(acyl)-sphingosyl-1,3-cyclic phosphate + ethanolamine. It catalyses the reaction a 1-acyl-sn-glycero-3-phosphocholine = a 1-acyl-sn-glycero-2,3-cyclic phosphate + choline. The enzyme catalyses a 1-acyl-sn-glycero-3-phosphoethanolamine = a 1-acyl-sn-glycero-2,3-cyclic phosphate + ethanolamine. Its function is as follows. Dermonecrotic toxins cleave the phosphodiester linkage between the phosphate and headgroup of certain phospholipids (sphingolipid and lysolipid substrates), forming an alcohol (often choline) and a cyclic phosphate. This toxin acts on sphingomyelin (SM). It may also act on ceramide phosphoethanolamine (CPE), lysophosphatidylcholine (LPC) and lysophosphatidylethanolamine (LPE), but not on lysophosphatidylserine (LPS), and lysophosphatidylglycerol (LPG). It acts by transphosphatidylation, releasing exclusively cyclic phosphate products as second products. Induces dermonecrosis, hemolysis, increased vascular permeability, edema, inflammatory response, and platelet aggregation. In Sicarius cf. damarensis (strain GJB-2008) (Six-eyed sand spider), this protein is Dermonecrotic toxin SdSicTox-betaIIB2ii.